The following is a 310-amino-acid chain: MGRSPSSDETGLKKGPWLPEEDDKLINYIHKHGHSSWSALPKLAGLNRCGKSCRLRWTNYLRPDIKRGKFSAEEEETILNLHAVLGNKWSMIASHLPGRTDNEIKNFWNTHLKKKLIQMGFDPMTHQPRTDDIFSSLSQLMSLSNLRGLVDLQQQFPMEDQALLNLQTEMAKLQLFQYLLQPSPAPMSINNINPNILNLLIKENSVTSNIDLGFLSSHLQDFNNNNLPSLKTLDDNHFSQNTSPIWLHEPPSLNQTMLPTHDPCAQSVDGFGSNQASSSHDQEVAVTDSVDWPDHHLFDDSMFPDISYQS.

HTH myb-type domains lie at Glu-9–Leu-61 and Arg-62–Leu-116. 2 consecutive DNA-binding regions (H-T-H motif) follow at residues Trp-37–Leu-61 and Trp-89–Leu-112.

Interacts with FBX5. In terms of tissue distribution, highly expressed in roots and at lower levels in leaves, stems and flowers.

The protein resides in the nucleus. In terms of biological role, probable transcription factor. The sequence is that of Transcription factor MYB53 from Arabidopsis thaliana (Mouse-ear cress).